A 741-amino-acid polypeptide reads, in one-letter code: Phosphoribosylformylglycinamidine synthase subunit PurL (741 aa).

Histidine 53 is a catalytic residue. ATP-binding residues include tyrosine 56 and lysine 95. Glutamate 97 is a binding site for Mg(2+). Substrate is bound by residues serine 98–histidine 101 and arginine 120. Histidine 99 acts as the Proton acceptor in catalysis. Mg(2+) is bound at residue aspartate 121. Glutamine 244 serves as a coordination point for substrate. Aspartate 274 contributes to the Mg(2+) binding site. Glutamate 318–glutamine 320 is a binding site for substrate. Aspartate 501 and glycine 538 together coordinate ATP. Asparagine 539 contributes to the Mg(2+) binding site. Serine 541 contributes to the substrate binding site.

It belongs to the FGAMS family. In terms of assembly, monomer. Part of the FGAM synthase complex composed of 1 PurL, 1 PurQ and 2 PurS subunits.

It is found in the cytoplasm. It carries out the reaction N(2)-formyl-N(1)-(5-phospho-beta-D-ribosyl)glycinamide + L-glutamine + ATP + H2O = 2-formamido-N(1)-(5-O-phospho-beta-D-ribosyl)acetamidine + L-glutamate + ADP + phosphate + H(+). Its pathway is purine metabolism; IMP biosynthesis via de novo pathway; 5-amino-1-(5-phospho-D-ribosyl)imidazole from N(2)-formyl-N(1)-(5-phospho-D-ribosyl)glycinamide: step 1/2. Its function is as follows. Part of the phosphoribosylformylglycinamidine synthase complex involved in the purines biosynthetic pathway. Catalyzes the ATP-dependent conversion of formylglycinamide ribonucleotide (FGAR) and glutamine to yield formylglycinamidine ribonucleotide (FGAM) and glutamate. The FGAM synthase complex is composed of three subunits. PurQ produces an ammonia molecule by converting glutamine to glutamate. PurL transfers the ammonia molecule to FGAR to form FGAM in an ATP-dependent manner. PurS interacts with PurQ and PurL and is thought to assist in the transfer of the ammonia molecule from PurQ to PurL. The chain is Phosphoribosylformylglycinamidine synthase subunit PurL from Ligilactobacillus salivarius (strain UCC118) (Lactobacillus salivarius).